A 64-amino-acid polypeptide reads, in one-letter code: DNA-binding protein 7a (64 aa).

N6-methyllysine; partial is present on residues Lys-5 and Lys-7.

It belongs to the 7 kDa DNA-binding/endoribonuclease P2 family. Homodimer. Lys-5 and Lys-7 were found to be 60% monomethylated. In terms of processing, ADP-ribosylated by endogenous proteins in vitro.

Functionally, can constrain negative DNA supercoils. May be involved in maintaining the integrity of the genome at high temperature. Has RNA endonuclease activity with a narrow substrate specificity; the cleavage products are 3'-phosphooligonucleotides. The chain is DNA-binding protein 7a (sso7a1) from Saccharolobus solfataricus (strain ATCC 35092 / DSM 1617 / JCM 11322 / P2) (Sulfolobus solfataricus).